Consider the following 348-residue polypeptide: Chitinase (348 aa).

The first 29 residues, 1–29, serve as a signal peptide directing secretion; it reads MKLKKIIPAFPLLSTVAVGLWLTPTQASA. In terms of domain architecture, GH18 spans 42-348; the sequence is KVLVGYWHNW…FATRYSNLVK (307 aa). The active-site Proton donor is Glu-161.

This sequence belongs to the glycosyl hydrolase 18 family.

It is found in the secreted. The enzyme catalyses Random endo-hydrolysis of N-acetyl-beta-D-glucosaminide (1-&gt;4)-beta-linkages in chitin and chitodextrins.. Its pathway is glycan degradation; chitin degradation. In terms of biological role, involved in chitin degradation. Catalyzes the cleavage of glycosidic linkages in chitooligosaccharides and in alpha- and beta-chitin. Its activity on chitooligosaccharides increases considerably with degrees of polymerization (the initial rate of hydrolysis for GlcNAc5 is about 130-fold higher than that for GlcNAc3). Its activity is greatly stimulated in the presence of the lytic chitin monooxygenase EfCBM33A, which attacks the crystalline structure of chitin and makes the polymer more accessible to the chitinase; combining the two enzymes leads to rapid and complete depolymerization of crystalline chitin, especially with beta-chitin as a substrate. Is likely involved in a chitin degradation pathway that allows E.faecalis V583 to grow on chitin as a carbon source. This is Chitinase from Enterococcus faecalis (strain ATCC 700802 / V583).